An 86-amino-acid chain; its full sequence is RNA-binding protein Hfq (86 aa).

One can recognise a Sm domain in the interval 9-68 (DPYLNTLRKEKVPVSIYLVNGIKLQGSIESFDQFVVLLKNTVSQMVYKHAISTVVPARPV). The interval 66–86 (RPVRLPSPSDSEHGDSEPGNA) is disordered. Residues 75 to 86 (DSEHGDSEPGNA) show a composition bias toward basic and acidic residues.

Belongs to the Hfq family. As to quaternary structure, homohexamer.

Its function is as follows. RNA chaperone that binds small regulatory RNA (sRNAs) and mRNAs to facilitate mRNA translational regulation in response to envelope stress, environmental stress and changes in metabolite concentrations. Also binds with high specificity to tRNAs. This chain is RNA-binding protein Hfq, found in Pseudomonas putida (strain W619).